A 640-amino-acid polypeptide reads, in one-letter code: MEATAGGSRRRPTLLRLLCPKKSLVSPPTPSLRWLLGSPRFLPPLTVAAALRSLPDGASSPDLQREAEEIRGLLVRGFDIVGAVHVGSADAGGALELARAVRERLYGERASHGMVGGCVELGTGEIRFVVSEGDGVEAVEVTEVVWEDDPGRLLWEKGCLLRCELLLKLPLYVPSDDTSGIEARFYSLIESTASKLRDPHVSYLIEGPRTTPGESHYSIILHGNDLNSVPHLSRNGSTEEYDANIVSCSKFFPAKRSLSLTRENADAIQITILSNQSFNSSKASTPAVEYFPAPALASLRAINLKLDILCYTSVDFPVAAAVSELVIPGLADQLSIMKKAIVSELTTQQPQLSPYHFVPPGLLIPVTTIYDTRYGEIEEKQSELRRNLHLRLQLPLDRPLLRISNALNFSIGGTDKKASKSGSSLLRDVHREIPSSGVSGGIISLIDGSYEYYHYLHDGIDDNGWGCAYRSLQTIMSWYRLQQYSSINVPSHREIQQVLVEIGDKDPSFIGSREWIGAIELSFVLDKLLGVSCKVINVRSGDELPEKCRELAIHFETQGTPVMIGGGVLAYTLLGVDYNESSGDCAFLILDPHYTGADDLKKIVNGGWCGWKKSIDSKGRSFFLKDKFYNLLLPQRPNMV.

Residues cysteine 467, aspartate 591, and histidine 593 contribute to the active site.

It belongs to the peptidase C78 family.

Thiol protease which recognizes and hydrolyzes the peptide bond at the C-terminal Gly of ufm-1, a ubiquitin-like modifier protein bound to a number of target proteins. In Oryza sativa subsp. japonica (Rice), this protein is Probable Ufm1-specific protease.